The chain runs to 317 residues: 4-hydroxy-3-methylbut-2-enyl diphosphate reductase (317 aa).

C12 contacts [4Fe-4S] cluster. Residues H41 and H74 each contribute to the (2E)-4-hydroxy-3-methylbut-2-enyl diphosphate site. Dimethylallyl diphosphate is bound by residues H41 and H74. Isopentenyl diphosphate contacts are provided by H41 and H74. Position 97 (C97) interacts with [4Fe-4S] cluster. H125 provides a ligand contact to (2E)-4-hydroxy-3-methylbut-2-enyl diphosphate. Residue H125 coordinates dimethylallyl diphosphate. Residue H125 participates in isopentenyl diphosphate binding. The Proton donor role is filled by E127. T168 serves as a coordination point for (2E)-4-hydroxy-3-methylbut-2-enyl diphosphate. Residue C198 participates in [4Fe-4S] cluster binding. Residues S226, S227, N228, and S270 each coordinate (2E)-4-hydroxy-3-methylbut-2-enyl diphosphate. 4 residues coordinate dimethylallyl diphosphate: S226, S227, N228, and S270. The isopentenyl diphosphate site is built by S226, S227, N228, and S270.

This sequence belongs to the IspH family. In terms of assembly, homodimer. [4Fe-4S] cluster is required as a cofactor.

The catalysed reaction is isopentenyl diphosphate + 2 oxidized [2Fe-2S]-[ferredoxin] + H2O = (2E)-4-hydroxy-3-methylbut-2-enyl diphosphate + 2 reduced [2Fe-2S]-[ferredoxin] + 2 H(+). It catalyses the reaction dimethylallyl diphosphate + 2 oxidized [2Fe-2S]-[ferredoxin] + H2O = (2E)-4-hydroxy-3-methylbut-2-enyl diphosphate + 2 reduced [2Fe-2S]-[ferredoxin] + 2 H(+). The protein operates within isoprenoid biosynthesis; dimethylallyl diphosphate biosynthesis; dimethylallyl diphosphate from (2E)-4-hydroxy-3-methylbutenyl diphosphate: step 1/1. It functions in the pathway isoprenoid biosynthesis; isopentenyl diphosphate biosynthesis via DXP pathway; isopentenyl diphosphate from 1-deoxy-D-xylulose 5-phosphate: step 6/6. Functionally, catalyzes the conversion of 1-hydroxy-2-methyl-2-(E)-butenyl 4-diphosphate (HMBPP) into a mixture of isopentenyl diphosphate (IPP) and dimethylallyl diphosphate (DMAPP). Acts in the terminal step of the DOXP/MEP pathway for isoprenoid precursor biosynthesis. In Yersinia pestis bv. Antiqua (strain Antiqua), this protein is 4-hydroxy-3-methylbut-2-enyl diphosphate reductase.